Here is a 124-residue protein sequence, read N- to C-terminus: Small ribosomal subunit protein uS12 (124 aa).

Aspartate 89 is modified (3-methylthioaspartic acid).

This sequence belongs to the universal ribosomal protein uS12 family. In terms of assembly, part of the 30S ribosomal subunit. Contacts proteins S8 and S17. May interact with IF1 in the 30S initiation complex.

With S4 and S5 plays an important role in translational accuracy. In terms of biological role, interacts with and stabilizes bases of the 16S rRNA that are involved in tRNA selection in the A site and with the mRNA backbone. Located at the interface of the 30S and 50S subunits, it traverses the body of the 30S subunit contacting proteins on the other side and probably holding the rRNA structure together. The combined cluster of proteins S8, S12 and S17 appears to hold together the shoulder and platform of the 30S subunit. This is Small ribosomal subunit protein uS12 from Vibrio atlanticus (strain LGP32) (Vibrio splendidus (strain Mel32)).